Here is a 300-residue protein sequence, read N- to C-terminus: tRNA dimethylallyltransferase 1 (300 aa).

13 to 20 (GPTGVGKT) provides a ligand contact to ATP. 15-20 (TGVGKT) contacts substrate. An interaction with substrate tRNA region spans residues 38 to 41 (DSRQ).

Belongs to the IPP transferase family. In terms of assembly, monomer. Mg(2+) is required as a cofactor.

The enzyme catalyses adenosine(37) in tRNA + dimethylallyl diphosphate = N(6)-dimethylallyladenosine(37) in tRNA + diphosphate. Catalyzes the transfer of a dimethylallyl group onto the adenine at position 37 in tRNAs that read codons beginning with uridine, leading to the formation of N6-(dimethylallyl)adenosine (i(6)A). The protein is tRNA dimethylallyltransferase 1 of Porphyromonas gingivalis (strain ATCC BAA-308 / W83).